The following is a 2283-amino-acid chain: DNA polymerase epsilon catalytic subunit A (2283 aa).

The interval 1-32 is disordered; it reads MVLRNSGRRHPEPGADGEGSRDDGPSSSVSAL. The span at 9-24 shows a compositional bias: basic and acidic residues; it reads RHPEPGADGEGSRDDG. Phosphoserine is present on residues Ser1184, Ser1296, and Ser1316. Disordered regions lie at residues 1935–1968 and 2014–2041; these read GQVKEQDSQAREETDEEEEDKEKDEEEEGMGESE and HSAPGSTPVKRKGASQFSQESEGATGSL. Positions 1936-1946 are enriched in basic and acidic residues; sequence QVKEQDSQARE. Residues 1947–1968 show a composition bias toward acidic residues; it reads ETDEEEEDKEKDEEEEGMGESE. Positions 2028–2037 are enriched in polar residues; sequence SQFSQESEGA. Zn(2+) is bound by residues Cys2155, Cys2158, Cys2184, and Cys2187. Residues 2155 to 2187 form a CysA-type zinc finger; sequence CHSCNFCRDLDLCKDSSFSQDGAILPQWLCSNC. Cys2218, Cys2221, Cys2233, and Cys2235 together coordinate [4Fe-4S] cluster. Positions 2218–2235 match the CysB motif motif; the sequence is CLKCRGMKETHMPVYCSC.

It belongs to the DNA polymerase type-B family. Component of the DNA polymerase epsilon complex consisting of four subunits: the catalytic subunit POLE and the accessory subunits POLE2, POLE3 and POLE4. Interacts with RAD17 and TOPBP1. [4Fe-4S] cluster is required as a cofactor.

The protein resides in the nucleus. It catalyses the reaction DNA(n) + a 2'-deoxyribonucleoside 5'-triphosphate = DNA(n+1) + diphosphate. In terms of biological role, catalytic component of the DNA polymerase epsilon complex. Participates in chromosomal DNA replication. Required during synthesis of the leading DNA strands at the replication fork and binds at/or near replication origins and moves along DNA with the replication fork. Has 3'-5' proofreading exonuclease activity that corrects errors arising during DNA replication. It is also involved in DNA synthesis during DNA repair. The polypeptide is DNA polymerase epsilon catalytic subunit A (Pole) (Mus musculus (Mouse)).